A 560-amino-acid polypeptide reads, in one-letter code: MDIKRTILIVALAIVSYVMVLKWNQDYGQAALPTQNVATNQAAPAIPDTPLGNNASASADVPSANGETSAPLETPVVTNKDLIHVKTDVLDLAIDPQGGDIAQLKLPLYPRRQDHPDVPFQLFDNGGERTYLAQSGLTGTNGPDARATGRPVYSTEQKTYQLADGQNQLNVDLKFSLDGVNYIKRFSFTRGLYDLKVTYLIDNESGKPWSGNLFAQLKRDASSDPSSSTATGTATYLGAALWTSNEPYKKVSMKDIDKGSLKETVQGGWVAWLQHYFVTAWIPNKGDANLVQTRKDSQGNYIIGFTGPALTVAPGAKAETSATLYAGPKSQAVLKELSPGLELTVDYGFLWFIAQPIFWLLQHIHSIVGNWGWSIIFLTMLIKGIFFPLSAASYKSMARMRAVAPKLAALKEQHGDDRQKMSQAMMELYKKEKINPLGGCLPILVQMPVFLSLYWVLLESVEMRQAPFMLWITDLSIKDPFFILPIIMGATMFIQQRLNPTPPDPMQAKVMKMMPIIFTFFFLWFPAGLVLYWVVNNVLSISQQWYITRKIEAATAKAAA.

The helical transmembrane segment at 7 to 27 threads the bilayer; that stretch reads ILIVALAIVSYVMVLKWNQDY. A disordered region spans residues 43-72; the sequence is APAIPDTPLGNNASASADVPSANGETSAPL. Helical transmembrane passes span 367 to 387, 437 to 457, 468 to 488, and 515 to 535; these read IVGN…GIFF, LGGC…YWVL, FMLW…PIIM, and PIIF…YWVV.

This sequence belongs to the OXA1/ALB3/YidC family. Type 1 subfamily. Interacts with the Sec translocase complex via SecD. Specifically interacts with transmembrane segments of nascent integral membrane proteins during membrane integration.

The protein localises to the cell inner membrane. Its function is as follows. Required for the insertion and/or proper folding and/or complex formation of integral membrane proteins into the membrane. Involved in integration of membrane proteins that insert both dependently and independently of the Sec translocase complex, as well as at least some lipoproteins. Aids folding of multispanning membrane proteins. In Pseudomonas fluorescens (strain SBW25), this protein is Membrane protein insertase YidC.